The following is a 125-amino-acid chain: Large ribosomal subunit protein bL12 (125 aa).

Belongs to the bacterial ribosomal protein bL12 family. In terms of assembly, homodimer. Part of the ribosomal stalk of the 50S ribosomal subunit. Forms a multimeric L10(L12)X complex, where L10 forms an elongated spine to which 2 to 4 L12 dimers bind in a sequential fashion. Binds GTP-bound translation factors.

In terms of biological role, forms part of the ribosomal stalk which helps the ribosome interact with GTP-bound translation factors. Is thus essential for accurate translation. In Erythrobacter litoralis (strain HTCC2594), this protein is Large ribosomal subunit protein bL12.